We begin with the raw amino-acid sequence, 352 residues long: Histidine biosynthesis bifunctional protein HisB (352 aa).

The segment at 1-164 is histidinol-phosphatase; that stretch reads MSQKILFIDR…EIENEILSSF (164 aa). The Nucleophile role is filled by Asp-9. Residues Asp-9 and Asp-11 each coordinate Mg(2+). Catalysis depends on Asp-11, which acts as the Proton donor. Zn(2+) contacts are provided by Cys-93, His-95, Cys-101, and Cys-103. Position 130 (Asp-130) interacts with Mg(2+). Residues 165–352 are imidazoleglycerol-phosphate dehydratase; it reads RSASYQRTTK…ENLASSKGVI (188 aa).

It in the N-terminal section; belongs to the histidinol-phosphatase family. The protein in the C-terminal section; belongs to the imidazoleglycerol-phosphate dehydratase family. Mg(2+) serves as cofactor. Requires Zn(2+) as cofactor.

It localises to the cytoplasm. It carries out the reaction D-erythro-1-(imidazol-4-yl)glycerol 3-phosphate = 3-(imidazol-4-yl)-2-oxopropyl phosphate + H2O. The enzyme catalyses L-histidinol phosphate + H2O = L-histidinol + phosphate. Its pathway is amino-acid biosynthesis; L-histidine biosynthesis; L-histidine from 5-phospho-alpha-D-ribose 1-diphosphate: step 6/9. It participates in amino-acid biosynthesis; L-histidine biosynthesis; L-histidine from 5-phospho-alpha-D-ribose 1-diphosphate: step 8/9. This chain is Histidine biosynthesis bifunctional protein HisB, found in Campylobacter jejuni subsp. jejuni serotype O:2 (strain ATCC 700819 / NCTC 11168).